A 432-amino-acid chain; its full sequence is Glutamyl-tRNA reductase (432 aa).

Substrate-binding positions include 49 to 52 (TCNR), S107, 112 to 114 (ETQ), and Q118. The active-site Nucleophile is the C50. 186–191 (GAGEMG) provides a ligand contact to NADP(+).

Belongs to the glutamyl-tRNA reductase family. As to quaternary structure, homodimer.

The catalysed reaction is (S)-4-amino-5-oxopentanoate + tRNA(Glu) + NADP(+) = L-glutamyl-tRNA(Glu) + NADPH + H(+). Its pathway is porphyrin-containing compound metabolism; protoporphyrin-IX biosynthesis; 5-aminolevulinate from L-glutamyl-tRNA(Glu): step 1/2. In terms of biological role, catalyzes the NADPH-dependent reduction of glutamyl-tRNA(Glu) to glutamate 1-semialdehyde (GSA). In Campylobacter jejuni subsp. jejuni serotype O:23/36 (strain 81-176), this protein is Glutamyl-tRNA reductase.